Consider the following 291-residue polypeptide: Alpha-soluble NSF attachment protein (291 aa).

4 TPR repeats span residues 14–51 (ADKRLRGGNFFKMFGGGSSRYDDAASDYTKAANLFKMS), 77–110 (AASSYVLAAGCYKKGNVIDAITCLKAAIEYYTDE), 117–150 (AKHQKEIAELYEAEGDFDQAIASYQIASDYFDGE), and 157–190 (HQCLLKIALFSAQLERYEKSIEIYEQVAAASLDN).

The protein belongs to the SNAP family. In terms of assembly, interacts with nsfA and probably SNARE proteins.

The protein localises to the cytoplasmic vesicle membrane. May be required for vesicular transport between the endoplasmic reticulum and the Golgi apparatus. Involved in vesicle fusion with nsfA and probably SNARE proteins. The sequence is that of Alpha-soluble NSF attachment protein (snpA) from Dictyostelium discoideum (Social amoeba).